Here is a 582-residue protein sequence, read N- to C-terminus: Membrane protein insertase YidC (582 aa).

A helical membrane pass occupies residues 3–23 (IQRALVITGIAVVSYLMIQAW). The segment at 38–92 (QVAEQGNSSSSDSADLPSVQSQTDNSIPSAQSDNDLPSVSPADIAQPTPSSQRIE) is disordered. Residues 45 to 58 (SSSSDSADLPSVQS) show a composition bias toward low complexity. Over residues 59–74 (QTDNSIPSAQSDNDLP) the composition is skewed to polar residues. 5 helical membrane-spanning segments follow: residues 357–377 (TVDY…LVFL), 394–414 (GVGN…AIFF), 464–484 (LGGC…YYVL), 495–515 (FFLW…PILM), and 541–561 (MPMI…LYWL).

This sequence belongs to the OXA1/ALB3/YidC family. Type 1 subfamily. Interacts with the Sec translocase complex via SecD. Specifically interacts with transmembrane segments of nascent integral membrane proteins during membrane integration.

It is found in the cell inner membrane. Its function is as follows. Required for the insertion and/or proper folding and/or complex formation of integral membrane proteins into the membrane. Involved in integration of membrane proteins that insert both dependently and independently of the Sec translocase complex, as well as at least some lipoproteins. Aids folding of multispanning membrane proteins. In Alcanivorax borkumensis (strain ATCC 700651 / DSM 11573 / NCIMB 13689 / SK2), this protein is Membrane protein insertase YidC.